Consider the following 100-residue polypeptide: Cell division protein FtsB (100 aa).

At 1–3 (MKQ) the chain is on the cytoplasmic side. The helical transmembrane segment at 4-21 (LIFLLICLLSLLQYRLWL) threads the bilayer. Over 22-100 (GDNNLSEYVL…ELRERNPFNR (79 aa)) the chain is Periplasmic. A coiled-coil region spans residues 49–73 (RNQILKEEIIDLKRGTEAIEERARN).

Belongs to the FtsB family. Part of a complex composed of FtsB, FtsL and FtsQ.

The protein localises to the cell inner membrane. In terms of biological role, essential cell division protein. May link together the upstream cell division proteins, which are predominantly cytoplasmic, with the downstream cell division proteins, which are predominantly periplasmic. This is Cell division protein FtsB from Shewanella frigidimarina (strain NCIMB 400).